The sequence spans 184 residues: Cathelicidin-related peptide Pt_CRAMP1 (184 aa).

Residues 1–22 (MEGFFWKTWLVVAAFAIGGTSS) form the signal peptide. Positions 23–150 (LPHKPLTYEE…EDEKDQPRRV (128 aa)) are excised as a propeptide. 2 disulfides stabilise this stretch: Cys81/Cys92 and Cys103/Cys120. Residues 125–144 (EDEEQNQEEEEEEEKEEDEK) are compositionally biased toward acidic residues. Residues 125–147 (EDEEQNQEEEEEEEKEEDEKDQP) form a disordered region.

It belongs to the cathelicidin family. As to expression, expressed by the venom gland.

The protein localises to the secreted. It localises to the target cell membrane. Potent antimicrobial peptide against Gram-negative (MIC=2 ug/ml against E.coli ATCC 25922, MIC=8 ug/ml against P.aeruginosa) and Gram-positive bacteria (MIC=32 ug/ml against E.faecalis, MIC=32 ug/ml against S.aureus). Adopts an amphipathic alpha helical conformation, that may allow to partition into the target membrane. High hemolytic activities have been observed on mammalian cells. In Pseudonaja textilis (Eastern brown snake), this protein is Cathelicidin-related peptide Pt_CRAMP1.